A 475-amino-acid chain; its full sequence is Ribulose bisphosphate carboxylase large chain (475 aa).

Residues 1 to 2 constitute a propeptide that is removed on maturation; that stretch reads MA. An N-acetylproline modification is found at P3. K14 carries the N6,N6,N6-trimethyllysine modification. Substrate is bound by residues N123 and T173. K175 (proton acceptor) is an active-site residue. K177 is a substrate binding site. Residues K201, D203, and E204 each contribute to the Mg(2+) site. An N6-carboxylysine modification is found at K201. H294 serves as the catalytic Proton acceptor. The substrate site is built by R295, H327, and S379.

It belongs to the RuBisCO large chain family. Type I subfamily. As to quaternary structure, heterohexadecamer of 8 large chains and 8 small chains; disulfide-linked. The disulfide link is formed within the large subunit homodimers. The cofactor is Mg(2+). In terms of processing, the disulfide bond which can form in the large chain dimeric partners within the hexadecamer appears to be associated with oxidative stress and protein turnover.

It is found in the plastid. The protein localises to the chloroplast. The enzyme catalyses 2 (2R)-3-phosphoglycerate + 2 H(+) = D-ribulose 1,5-bisphosphate + CO2 + H2O. It catalyses the reaction D-ribulose 1,5-bisphosphate + O2 = 2-phosphoglycolate + (2R)-3-phosphoglycerate + 2 H(+). Its function is as follows. RuBisCO catalyzes two reactions: the carboxylation of D-ribulose 1,5-bisphosphate, the primary event in carbon dioxide fixation, as well as the oxidative fragmentation of the pentose substrate in the photorespiration process. Both reactions occur simultaneously and in competition at the same active site. In Tupiella akineta (Green alga), this protein is Ribulose bisphosphate carboxylase large chain.